Consider the following 301-residue polypeptide: Probable alpha-L-glutamate ligase 1 (301 aa).

An ATP-grasp domain is found at 104–287 (LQLLSRKGIG…VTEPIVEYIE (184 aa)). ATP is bound by residues Lys-141, 178-179 (EY), Asp-187, and 211-213 (RSN). Positions 248, 260, and 262 each coordinate Mg(2+). Residues Asp-248, Glu-260, and Asn-262 each coordinate Mn(2+).

Belongs to the RimK family. It depends on Mg(2+) as a cofactor. The cofactor is Mn(2+).

The protein is Probable alpha-L-glutamate ligase 1 of Shewanella baltica (strain OS155 / ATCC BAA-1091).